The chain runs to 147 residues: Urease accessory protein UreE (147 aa).

Belongs to the UreE family.

The protein localises to the cytoplasm. Its function is as follows. Involved in urease metallocenter assembly. Binds nickel. Probably functions as a nickel donor during metallocenter assembly. This Marinomonas sp. (strain MWYL1) protein is Urease accessory protein UreE.